The following is a 290-amino-acid chain: Undecaprenyl-diphosphatase (290 aa).

8 helical membrane passes run 5-25 (IGIF…YFPI), 44-64 (GTAY…TYFY), 88-108 (VRLF…GLAL), 122-142 (LSVI…SESL), 152-172 (IRVI…VPGV), 195-215 (FSFL…LKVL), 226-246 (PIVA…AWLL), and 255-275 (LVFV…LAAG).

The protein belongs to the UppP family.

Its subcellular location is the cell inner membrane. It carries out the reaction di-trans,octa-cis-undecaprenyl diphosphate + H2O = di-trans,octa-cis-undecaprenyl phosphate + phosphate + H(+). Catalyzes the dephosphorylation of undecaprenyl diphosphate (UPP). Confers resistance to bacitracin. This is Undecaprenyl-diphosphatase from Gloeobacter violaceus (strain ATCC 29082 / PCC 7421).